A 278-amino-acid chain; its full sequence is HTH-type transcriptional activator RhaS (278 aa).

Residues 174-272 (NLLLAWLEDH…NWSPRDIRQG (99 aa)) form the HTH araC/xylS-type domain. DNA-binding regions (H-T-H motif) lie at residues 191 to 212 (DAVA…KQKT) and 239 to 262 (VTDI…RREF).

In terms of assembly, binds DNA as a dimer.

Its subcellular location is the cytoplasm. Functionally, activates expression of the rhaBAD and rhaT operons. This is HTH-type transcriptional activator RhaS from Escherichia coli O45:K1 (strain S88 / ExPEC).